The chain runs to 85 residues: MMIYLSLSLGLLIFSSSNKHLLVTLLSLEFLILLLFSLLVYSNYMSMINAFIFLSVTVCEGALGFSVLVSLVRSSGSDQVQFLNE.

2 helical membrane-spanning segments follow: residues 21–41 and 51–71; these read LLVT…LLVY and FIFL…LVSL.

It belongs to the complex I subunit 4L family.

It is found in the mitochondrion membrane. It carries out the reaction a ubiquinone + NADH + 5 H(+)(in) = a ubiquinol + NAD(+) + 4 H(+)(out). Functionally, core subunit of the mitochondrial membrane respiratory chain NADH dehydrogenase (Complex I) that is believed to belong to the minimal assembly required for catalysis. Complex I functions in the transfer of electrons from NADH to the respiratory chain. The immediate electron acceptor for the enzyme is believed to be ubiquinone. The sequence is that of NADH-ubiquinone oxidoreductase chain 4L (ND4L) from Artemia franciscana (Brine shrimp).